A 426-amino-acid polypeptide reads, in one-letter code: Pannexin-1 (426 aa).

Topologically, residues 1-40 (MAIAQLATEYVFSDFLLKEPTEPKFKGLRLELAVDKMVTC) are cytoplasmic. The residue at position 40 (Cys40) is an S-nitrosocysteine. A helical transmembrane segment spans residues 41–61 (IAVGLPLLLISLAFAQEISIG). The Extracellular segment spans residues 62 to 106 (TQISCFSPSSFSWRQAAFVDSYCWAAVQQKNSLQSESGNLPLWLH). 2 disulfide bridges follow: Cys66–Cys265 and Cys84–Cys246. A helical membrane pass occupies residues 107 to 127 (KFFPYILLLFAILLYLPPLFW). Topologically, residues 128-217 (RFAAAPHICS…NLIIKYISCR (90 aa)) are cytoplasmic. Residue Tyr199 is modified to Phosphotyrosine. A helical membrane pass occupies residues 218–238 (LLTLIIILLACIYLGYYFSLS). Over 239-266 (SLSDEFVCSIKSGILRNDSTVPDQFQCK) the chain is Extracellular. An N-linked (GlcNAc...) asparagine glycan is attached at Asn255. Residues 267-287 (LIAVGIFQLLSVINLVVYVLL) form a helical membrane-spanning segment. Residues 288–426 (APVVVYTLFV…ARQRLLDSSC (139 aa)) lie on the Cytoplasmic side of the membrane. At Cys347 the chain carries S-nitrosocysteine. Polar residues predominate over residues 405–414 (DSETKANNGE). Residues 405–426 (DSETKANNGEKNARQRLLDSSC) form a disordered region. The segment covering 415 to 426 (KNARQRLLDSSC) has biased composition (basic and acidic residues).

The protein belongs to the pannexin family. In terms of assembly, homoheptameric. S-nitrosylation inhibits channel currents and ATP release. In terms of processing, N-glycosylation plays a role in cell surface targeting. Glycosylation at its extracellular surface makes unlikely that two oligomers could dock to form an intercellular channel such as in gap junctions. Exists in three glycosylation states: non-glycosylated (GLY0), high-mannose glycosylated (GLY1), and fully mature glycosylated (GLY2). Post-translationally, cleaved by CASP3 and CASP7 during apoptosis. Cleavage opens the channel for the release of metabolites and induces plasma membrane permeability during apoptosis. Phosphorylated at Tyr-199 by SRC. Phosphorylation activates ATP release. Constitutively phosphorylated in vascular smooth muscle cells. Widely expressed. Highest expression is observed in oocytes and brain. Detected at very low levels in sperm cells.

It is found in the cell membrane. Its subcellular location is the endoplasmic reticulum membrane. The enzyme catalyses chloride(in) = chloride(out). The catalysed reaction is iodide(out) = iodide(in). It carries out the reaction ATP(in) = ATP(out). It catalyses the reaction K(+)(in) = K(+)(out). The enzyme catalyses Ca(2+)(in) = Ca(2+)(out). The catalysed reaction is Na(+)(in) = Na(+)(out). It carries out the reaction nitrate(in) = nitrate(out). It catalyses the reaction L-aspartate(out) = L-aspartate(in). The enzyme catalyses L-glutamate(out) = L-glutamate(in). The catalysed reaction is D-gluconate(in) = D-gluconate(out). It carries out the reaction spermidine(in) = spermidine(out). Ion channel involved in a variety of physiological functions such as blood pressure regulation, apoptotic cell clearance and oogenesis. Forms anion-selective channels with relatively low conductance and an order of permeabilities: nitrate&gt;iodide&gt;chlroride&gt;&gt;aspartate=glutamate=gluconate. Can release ATP upon activation through phosphorylation or cleavage at C-terminus. May play a role as a Ca(2+)-leak channel to regulate ER Ca(2+) homeostasis. Functionally, during apoptosis, the C terminal tail is cleaved by caspases, which opens the main pore acting as a large-pore ATP efflux channel with a broad distribution, which allows the regulated release of molecules and ions smaller than 1 kDa, such as nucleotides ATP and UTP, and selective plasma membrane permeability to attract phagocytes that engulf the dying cells. This chain is Pannexin-1, found in Homo sapiens (Human).